Consider the following 325-residue polypeptide: BTB/POZ domain-containing protein KCTD12 (325 aa).

Positions 1 to 28 are disordered; sequence MALADSTRGLPNGGGGGGGSGSSSSSAE. Ala2 bears the N-acetylalanine mark. A compositionally biased stretch (gly residues) spans 11-21; that stretch reads PNGGGGGGGSG. Phosphotyrosine is present on Tyr119. The disordered stretch occupies residues 129-202; that stretch reads LGAPQQPGPG…PLLTPSQSLD (74 aa). Phosphoserine is present on residues Ser151, Ser171, and Ser185. The residue at position 196 (Thr196) is a Phosphothreonine. The residue at position 200 (Ser200) is a Phosphoserine.

As to quaternary structure, interacts as a tetramer with GABBR1 and GABBR2. As to expression, present in a variety of fetal organs, with highest expression levels in the cochlea and brain and, in stark contrast, is detected only at extremely low levels in adult organs, such as brain and lung.

It localises to the presynaptic cell membrane. The protein localises to the postsynaptic cell membrane. Auxiliary subunit of GABA-B receptors that determine the pharmacology and kinetics of the receptor response. Increases agonist potency and markedly alter the G-protein signaling of the receptors by accelerating onset and promoting desensitization. The sequence is that of BTB/POZ domain-containing protein KCTD12 (KCTD12) from Homo sapiens (Human).